The chain runs to 159 residues: Ribosome maturation factor RimP (159 aa).

Belongs to the RimP family.

The protein localises to the cytoplasm. Required for maturation of 30S ribosomal subunits. The chain is Ribosome maturation factor RimP from Streptococcus pneumoniae serotype 19F (strain G54).